Here is a 374-residue protein sequence, read N- to C-terminus: MQQKCYYEILNVSKTASGVEIKRAYRKLAMKYHPDRNPDDKEAEIKFKEISEAYEILSDDGKRSRYDQFGHAGVNQQGGAGSAGGFGGFEDIFDTFFGGGTSRGSNRSRASRGSDLEYTIEISLEEAFFGVEKEINIPRMESCDSCDGTGSKSKTKTTCHACHGQGTIRRQQGFFAFEQTCPVCNGTGSSIADPCDDCYGSGKIKKQKTIKVKIPEGVDNGDRIRLQGEGDSGSNGAMNGDLYIQILVKEHKIFERRDMNLYCEMPISFTKACLGGEIKVPTLDGEVVLKVVPETQTGKVFRLRERGMKSLRGQRRGDLLCKVVVETPINLNSEQKELLEKFADSLGEDYQSKHSPKSKTWFDNVKDYAKKFFE.

In terms of domain architecture, J spans 5 to 70 (CYYEILNVSK…GKRSRYDQFG (66 aa)). A CR-type zinc finger spans residues 130–207 (GVEKEINIPR…CYGSGKIKKQ (78 aa)). Residues cysteine 143, cysteine 146, cysteine 159, cysteine 162, cysteine 181, cysteine 184, cysteine 195, and cysteine 198 each coordinate Zn(2+). CXXCXGXG motif repeat units follow at residues 143 to 150 (CDSCDGTG), 159 to 166 (CHACHGQG), 181 to 188 (CPVCNGTG), and 195 to 202 (CDDCYGSG).

It belongs to the DnaJ family. In terms of assembly, homodimer. Requires Zn(2+) as cofactor.

It localises to the cytoplasm. In terms of biological role, participates actively in the response to hyperosmotic and heat shock by preventing the aggregation of stress-denatured proteins and by disaggregating proteins, also in an autonomous, DnaK-independent fashion. Unfolded proteins bind initially to DnaJ; upon interaction with the DnaJ-bound protein, DnaK hydrolyzes its bound ATP, resulting in the formation of a stable complex. GrpE releases ADP from DnaK; ATP binding to DnaK triggers the release of the substrate protein, thus completing the reaction cycle. Several rounds of ATP-dependent interactions between DnaJ, DnaK and GrpE are required for fully efficient folding. Also involved, together with DnaK and GrpE, in the DNA replication of plasmids through activation of initiation proteins. The chain is Chaperone protein DnaJ from Francisella philomiragia subsp. philomiragia (strain ATCC 25017 / CCUG 19701 / FSC 153 / O#319-036).